Reading from the N-terminus, the 249-residue chain is Phosphonates import ATP-binding protein PhnC (249 aa).

Residues 2 to 246 (IEFKKVEKVW…KLNESKLEEI (245 aa)) form the ABC transporter domain. Residue 35 to 42 (GLSGAGKT) participates in ATP binding.

It belongs to the ABC transporter superfamily. Phosphonates importer (TC 3.A.1.9.1) family. As to quaternary structure, the complex is composed of two ATP-binding proteins (PhnC), two transmembrane proteins (PhnE) and a solute-binding protein (PhnD).

Its subcellular location is the cell membrane. The catalysed reaction is phosphonate(out) + ATP + H2O = phosphonate(in) + ADP + phosphate + H(+). Part of the ABC transporter complex PhnCDE involved in phosphonates import. Responsible for energy coupling to the transport system. The chain is Phosphonates import ATP-binding protein PhnC from Mesoplasma florum (strain ATCC 33453 / NBRC 100688 / NCTC 11704 / L1) (Acholeplasma florum).